The chain runs to 229 residues: Uracil-DNA glycosylase (229 aa).

The active-site Proton acceptor is aspartate 70.

It belongs to the uracil-DNA glycosylase (UDG) superfamily. UNG family.

Its subcellular location is the cytoplasm. It catalyses the reaction Hydrolyzes single-stranded DNA or mismatched double-stranded DNA and polynucleotides, releasing free uracil.. Functionally, excises uracil residues from the DNA which can arise as a result of misincorporation of dUMP residues by DNA polymerase or due to deamination of cytosine. This is Uracil-DNA glycosylase from Chlamydia trachomatis serovar A (strain ATCC VR-571B / DSM 19440 / HAR-13).